A 391-amino-acid chain; its full sequence is Ferrochelatase (391 aa).

2 residues coordinate Fe cation: His196 and Glu281.

It belongs to the ferrochelatase family.

The protein localises to the cytoplasm. The enzyme catalyses heme b + 2 H(+) = protoporphyrin IX + Fe(2+). It functions in the pathway porphyrin-containing compound metabolism; protoheme biosynthesis; protoheme from protoporphyrin-IX: step 1/1. In terms of biological role, catalyzes the ferrous insertion into protoporphyrin IX. The protein is Ferrochelatase of Prochlorococcus marinus (strain MIT 9211).